The following is a 1479-amino-acid chain: Chromosome partition protein MukB (1479 aa).

An ATP-binding site is contributed by 34 to 41 (GGNGAGKS). Coiled coils occupy residues 337–418 (LNLV…QYQQ), 511–604 (QAER…APVW), 780–810 (RAAR…DVQK), 847–1116 (ELDR…AKAG), and 1206–1265 (DDPV…LQAV). The tract at residues 666 to 783 (PGGSEDPRLN…EVPLFGRAAR (118 aa)) is flexible hinge.

It belongs to the SMC family. MukB subfamily. As to quaternary structure, homodimerization via its hinge domain. Binds to DNA via its C-terminal region. Interacts, and probably forms a ternary complex, with MukE and MukF via its C-terminal region. The complex formation is stimulated by calcium or magnesium. Interacts with tubulin-related protein FtsZ.

It localises to the cytoplasm. The protein localises to the nucleoid. Plays a central role in chromosome condensation, segregation and cell cycle progression. Functions as a homodimer, which is essential for chromosome partition. Involved in negative DNA supercoiling in vivo, and by this means organize and compact chromosomes. May achieve or facilitate chromosome segregation by condensation DNA from both sides of a centrally located replisome during cell division. The chain is Chromosome partition protein MukB from Pectobacterium atrosepticum (strain SCRI 1043 / ATCC BAA-672) (Erwinia carotovora subsp. atroseptica).